Here is a 402-residue protein sequence, read N- to C-terminus: Formate-dependent phosphoribosylglycinamide formyltransferase (402 aa).

N(1)-(5-phospho-beta-D-ribosyl)glycinamide-binding positions include 22 to 23 and Glu-82; that span reads EL. Residues Arg-115, Lys-160, 165–170, 200–203, and Glu-208 each bind ATP; these read SSGKGQ and EGFV. Residues 120–318 form the ATP-grasp domain; the sequence is RLAAETLGLP…EFELHARAIL (199 aa). Mg(2+)-binding residues include Glu-277 and Glu-289. Residues Asp-296, Lys-365, and 372–373 each bind N(1)-(5-phospho-beta-D-ribosyl)glycinamide; that span reads RR.

It belongs to the PurK/PurT family. Homodimer.

It carries out the reaction N(1)-(5-phospho-beta-D-ribosyl)glycinamide + formate + ATP = N(2)-formyl-N(1)-(5-phospho-beta-D-ribosyl)glycinamide + ADP + phosphate + H(+). It functions in the pathway purine metabolism; IMP biosynthesis via de novo pathway; N(2)-formyl-N(1)-(5-phospho-D-ribosyl)glycinamide from N(1)-(5-phospho-D-ribosyl)glycinamide (formate route): step 1/1. In terms of biological role, involved in the de novo purine biosynthesis. Catalyzes the transfer of formate to 5-phospho-ribosyl-glycinamide (GAR), producing 5-phospho-ribosyl-N-formylglycinamide (FGAR). Formate is provided by PurU via hydrolysis of 10-formyl-tetrahydrofolate. This chain is Formate-dependent phosphoribosylglycinamide formyltransferase, found in Mycobacteroides abscessus (strain ATCC 19977 / DSM 44196 / CCUG 20993 / CIP 104536 / JCM 13569 / NCTC 13031 / TMC 1543 / L948) (Mycobacterium abscessus).